A 388-amino-acid polypeptide reads, in one-letter code: Acyl-CoA dehydrogenase fadE12 (388 aa).

The protein belongs to the acyl-CoA dehydrogenase family. Requires FAD as cofactor.

The enzyme catalyses a 2,3-saturated acyl-CoA + A = a 2,3-dehydroacyl-CoA + AH2. The polypeptide is Acyl-CoA dehydrogenase fadE12 (fadE12) (Mycobacterium bovis (strain ATCC BAA-935 / AF2122/97)).